We begin with the raw amino-acid sequence, 118 residues long: Holo-[acyl-carrier-protein] synthase (118 aa).

Mg(2+) contacts are provided by aspartate 8 and glutamate 58.

The protein belongs to the P-Pant transferase superfamily. AcpS family. Mg(2+) is required as a cofactor.

Its subcellular location is the cytoplasm. The catalysed reaction is apo-[ACP] + CoA = holo-[ACP] + adenosine 3',5'-bisphosphate + H(+). Functionally, transfers the 4'-phosphopantetheine moiety from coenzyme A to a Ser of acyl-carrier-protein. In Streptococcus pyogenes serotype M5 (strain Manfredo), this protein is Holo-[acyl-carrier-protein] synthase.